The sequence spans 1861 residues: Golgi-specific brefeldin A-resistance guanine nucleotide exchange factor 1 (1861 aa).

The tract at residues 1–211 is DCB; DCB:DCB domain and DCB:HUS domain interaction; the sequence is MVDKNIYIIQ…EPKSYVGTNM (211 aa). Residues 1–380 form an interaction with RAB1B region; sequence MVDKNIYIIQ…SVHDMDYVNP (380 aa). Disordered regions lie at residues 210–264 and 289–353; these read NMKK…LTGG and CTDS…VESI. Residues 227–241 are compositionally biased toward basic residues; the sequence is WKKQKRSPRPPRHTT. A compositionally biased stretch (polar residues) spans 253–262; the sequence is NGATLPSNLT. Phosphoserine is present on residues Ser349 and Ser352. Phosphothreonine is present on Thr507. The interval 530-550 is HUS; DCB:HUS domain interaction; it reads RIPSFVTELYINYDCDYYCSN. The interval 603–634 is disordered; that stretch reads QEKKETARPGFEAVDGNPETNKSERATSDGKS. In terms of domain architecture, SEC7 spans 692 to 882; that stretch reads ELIEIKNKKK…EDMYHAIKNE (191 aa). The interval 886-1372 is phosphatidylinositol-phosphate binding; required for translocation to the leading edge and for ARF1 activation upon GPCR signaling; sequence MPEEQTGLVR…LSRPGPSPLV (487 aa). The span at 1286 to 1296 shows a compositional bias: low complexity; it reads TARADAPDAGA. The disordered stretch occupies residues 1286–1335; sequence TARADAPDAGAQSDSELPSYHQNDVSLDRGYTSDSEVYTDHGRPGKIHRS. The span at 1297-1310 shows a compositional bias: polar residues; sequence QSDSELPSYHQNDV. Residue Ser1298 is modified to Phosphoserine. A Phosphotyrosine modification is found at Tyr1316. Phosphoserine occurs at positions 1318, 1320, and 1335. Thr1337 bears the Phosphothreonine mark. Disordered stretches follow at residues 1431–1486 and 1727–1812; these read GCKS…EGVP and PMPA…PLIL. Over residues 1434–1448 the composition is skewed to basic and acidic residues; it reads SQDKRSKSHKYDSKG. A phosphoserine mark is found at Ser1477, Ser1775, and Ser1786. Positions 1776 to 1793 are enriched in low complexity; that stretch reads TRAPSSSSPGSPMASSPS.

As to quaternary structure, can form homodimers and probably homotetramers. Interacts with COPG1; the interaction is independent on ARF1 activation. Interacts with ARF1, ARF3, ARF4 and ARF5. Interacts with RAB1B (GTP-bound form); required for GBF1 membrane association. Interacts with GGA1, GGA2 and GGA3. Interacts with USO1. Interacts (via SEC7 domain) with PNPLA2 (via C-terminus); the interaction is direct. Interacts with ARMH3.

The protein localises to the golgi apparatus. The protein resides in the cis-Golgi network. Its subcellular location is the endoplasmic reticulum-Golgi intermediate compartment. It is found in the trans-Golgi network. It localises to the cytoplasm. The protein localises to the lipid droplet. The protein resides in the membrane. In terms of biological role, guanine-nucleotide exchange factor (GEF) for members of the Arf family of small GTPases involved in trafficking in the early secretory pathway; its GEF activity initiates the coating of nascent vesicles via the localized generation of activated ARFs through replacement of GDP with GTP. Recruitment to cis-Golgi membranes requires membrane association of Arf-GDP and can be regulated by ARF1, ARF3, ARF4 and ARF5. Involved in the recruitment of the COPI coat complex to the endoplasmic reticulum exit sites (ERES), and the endoplasmic reticulum-Golgi intermediate (ERGIC) and cis-Golgi compartments which implicates ARF1 activation. Involved in COPI vesicle-dependent retrograde transport from the ERGIC and cis-Golgi compartments to the endoplasmic reticulum (ER). Involved in the trans-Golgi network recruitment of GGA1, GGA2, GGA3, BIG1, BIG2, and the AP-1 adaptor protein complex related to chlathrin-dependent transport; the function requires its GEF activity (probably at least in part on ARF4 and ARF5). Has GEF activity towards ARF1. Has in vitro GEF activity towards ARF5. Involved in the processing of PSAP. Required for the assembly of the Golgi apparatus. The AMPK-phosphorylated form is involved in Golgi disassembly during mitotis and under stress conditions. May be involved in the COPI vesicle-dependent recruitment of PNPLA2 to lipid droplets; however, this function is under debate. In neutrophils, involved in G protein-coupled receptor (GPCR)-mediated chemotaxis und superoxide production. Proposed to be recruited by phosphatidylinositol-phosphates generated upon GPCR stimulation to the leading edge where it recruits and activates ARF1, and is involved in recruitment of GIT2 and the NADPH oxidase complex. Plays a role in maintaining mitochondrial morphology. The protein is Golgi-specific brefeldin A-resistance guanine nucleotide exchange factor 1 of Mus musculus (Mouse).